Consider the following 221-residue polypeptide: MSGWADERGGEGDGRIYVGNLPTDVREKDLEDLFYKYGRIREIELKNRHGLVPFAFVRFEDPRDAEDAIYGRNGYDYGQCRLRVEFPRAYGGRGGWPRASRNGPPTRRSDFRVLVSGLPPSGSWQDLKDHMREAGDVCYADVQKDGMGMVEYLRKEDMEYALRKLDDTKFRSHEGETSYIRVYPERGTSYGCSRSRSGSRGRDSPYQSRGSPHYFSPFRPY.

2 consecutive RRM domains span residues 14-89 (GRIY…FPRA) and 111-187 (FRVL…PERG). Lys36 is covalently cross-linked (Glycyl lysine isopeptide (Lys-Gly) (interchain with G-Cter in SUMO2)). A compositionally biased stretch (low complexity) spans 187–198 (GTSYGCSRSRSG). Positions 187–221 (GTSYGCSRSRSGSRGRDSPYQSRGSPHYFSPFRPY) are disordered. Residues 188–200 (TSYGCSRSRSGSR) are interaction with SAFB1. 6 positions are modified to phosphoserine: Ser189, Ser193, Ser195, Ser204, Ser208, and Ser211. Phosphotyrosine is present on Tyr214. At Ser216 the chain carries Phosphoserine.

The protein belongs to the splicing factor SR family. As to quaternary structure, interacts with KHDRBS3. Interacts with HABP4. Interacts with NOL3/ARC/NOP30. Interacts with NSEP1/YB-1/YB1. Interacts with SAFB/SAFB1. Interacts with SRSF6/SFRS6. Interacts with TRA2B/SFRS10. Interacts with C1QBP. May also interact with DUSP11/PIR1. In terms of processing, extensively phosphorylated on serine residues in the RS domain.

It is found in the nucleus. Plays a role in constitutive splicing and can modulate the selection of alternative splice sites. Represses the splicing of MAPT/Tau exon 10. This is Serine/arginine-rich splicing factor 9 (Srsf9) from Rattus norvegicus (Rat).